The primary structure comprises 344 residues: D-amino-acid oxidase (344 aa).

The FAD site is built by Ala-11, Ser-14, Ser-49, Gly-53, Asn-55, and Ile-167. Residues Tyr-229 and Arg-290 each coordinate (R)-lactate. The anthranilate site is built by Tyr-229 and Arg-290. Residues Arg-290, Ser-321, Gly-324, Tyr-325, and Gln-326 each coordinate FAD.

Belongs to the DAMOX/DASOX family. It depends on FAD as a cofactor.

Its subcellular location is the peroxisome. The catalysed reaction is a D-alpha-amino acid + O2 + H2O = a 2-oxocarboxylate + H2O2 + NH4(+). It catalyses the reaction D-alanine + O2 + H2O = pyruvate + H2O2 + NH4(+). In terms of biological role, catalyzes the oxidative deamination of D-amino acids with broad substrate specificity. Enables the organism to utilize D-amino acids as a source of nutrients. Enables the organism to utilize D-alanine as a source of nitrogen. This Komagataella phaffii (strain GS115 / ATCC 20864) (Yeast) protein is D-amino-acid oxidase.